A 435-amino-acid polypeptide reads, in one-letter code: AP-2 complex subunit mu (435 aa).

Ser45 is subject to Phosphoserine. Residue Thr156 is modified to Phosphothreonine. The 265-residue stretch at 170 to 434 (RNELFLDVLE…IGRSGIYETR (265 aa)) folds into the MHD domain. Positions 341, 345, and 354 each coordinate a 1,2-diacyl-sn-glycero-3-phospho-(1D-myo-inositol-3,4,5-trisphosphate).

It belongs to the adaptor complexes medium subunit family. As to quaternary structure, adaptor protein complex 2 (AP-2) is a heterotetramer composed of two large adaptins (alpha-type subunit AP2A1 or AP2A2 and beta-type subunit AP2B1), a medium adaptin (mu-type subunit AP2M1) and a small adaptin (sigma-type subunit AP2S1). Interacts with ATP6V1H and MEGF10. Interacts with EGFR. Interacts with PIP5K1C; tyrosine phosphorylation of PIP5K1C weakens the interaction. Interacts with KIAA0319; required for clathrin-mediated endocytosis of KIAA0319. Interacts with DVL2 (via DEP domain). Interacts with KCNQ1; mediates estrogen-induced internalization via clathrin-coated vesicles. Together with AP2A1 or AP2A2 and AP2B1, it interacts with ADAM10; this interaction facilitates ADAM10 endocytosis from the plasma membrane during long-term potentiation in hippocampal neurons. Probably interacts with ACE2 (via endocytic sorting signal motif); the interaction is inhibited by ACE2 phosphorylation. Interacts with RALBP1; the interaction is direct. Interacts with TMEM106B (via N-terminus). Post-translationally, phosphorylation at Thr-156 increases the affinity of the AP-2 complex for cargo membrane proteins during the initial stages of endocytosis.

Its subcellular location is the cell membrane. The protein localises to the membrane. The protein resides in the coated pit. Its function is as follows. Component of the adaptor protein complex 2 (AP-2). Adaptor protein complexes function in protein transport via transport vesicles in different membrane traffic pathways. Adaptor protein complexes are vesicle coat components and appear to be involved in cargo selection and vesicle formation. AP-2 is involved in clathrin-dependent endocytosis in which cargo proteins are incorporated into vesicles surrounded by clathrin (clathrin-coated vesicles, CCVs) which are destined for fusion with the early endosome. The clathrin lattice serves as a mechanical scaffold but is itself unable to bind directly to membrane components. Clathrin-associated adaptor protein (AP) complexes which can bind directly to both the clathrin lattice and to the lipid and protein components of membranes are considered to be the major clathrin adaptors contributing the CCV formation. AP-2 also serves as a cargo receptor to selectively sort the membrane proteins involved in receptor-mediated endocytosis. AP-2 seems to play a role in the recycling of synaptic vesicle membranes from the presynaptic surface. AP-2 recognizes Y-X-X-[FILMV] (Y-X-X-Phi) and [ED]-X-X-X-L-[LI] endocytosis signal motifs within the cytosolic tails of transmembrane cargo molecules. AP-2 may also play a role in maintaining normal post-endocytic trafficking through the ARF6-regulated, non-clathrin pathway. During long-term potentiation in hippocampal neurons, AP-2 is responsible for the endocytosis of ADAM10. The AP-2 mu subunit binds to transmembrane cargo proteins; it recognizes the Y-X-X-Phi motifs. The surface region interacting with to the Y-X-X-Phi motif is inaccessible in cytosolic AP-2, but becomes accessible through a conformational change following phosphorylation of AP-2 mu subunit at Thr-156 in membrane-associated AP-2. The membrane-specific phosphorylation event appears to involve assembled clathrin which activates the AP-2 mu kinase AAK1. Plays a role in endocytosis of frizzled family members upon Wnt signaling. The chain is AP-2 complex subunit mu (AP2M1) from Pongo abelii (Sumatran orangutan).